The following is a 233-amino-acid chain: Protein-L-isoaspartate O-methyltransferase (233 aa).

Ser83 is a catalytic residue.

This sequence belongs to the methyltransferase superfamily. L-isoaspartyl/D-aspartyl protein methyltransferase family.

It localises to the cytoplasm. It carries out the reaction [protein]-L-isoaspartate + S-adenosyl-L-methionine = [protein]-L-isoaspartate alpha-methyl ester + S-adenosyl-L-homocysteine. Functionally, catalyzes the methyl esterification of L-isoaspartyl residues in peptides and proteins that result from spontaneous decomposition of normal L-aspartyl and L-asparaginyl residues. It plays a role in the repair and/or degradation of damaged proteins. The protein is Protein-L-isoaspartate O-methyltransferase of Opitutus terrae (strain DSM 11246 / JCM 15787 / PB90-1).